Consider the following 957-residue polypeptide: Thioredoxin domain-containing protein 11 (957 aa).

Residues Met-1–Ser-13 show a composition bias toward gly residues. Residues Met-1–Leu-47 are disordered. Residues Ser-32 to Glu-44 are compositionally biased toward low complexity. The helical transmembrane segment at Leu-64 to Ser-84 threads the bilayer. The Thioredoxin 1 domain occupies Ile-91–Lys-213. Cystine bridges form between Cys-441/Cys-444 and Cys-691/Cys-694. The Thioredoxin 2 domain occupies Leu-621–Asp-771. Positions Ala-785–Glu-889 form a coiled coil. Over residues Leu-904–Glu-925 the composition is skewed to basic and acidic residues. Residues Leu-904–Asp-957 form a disordered region. A compositionally biased stretch (polar residues) spans Asn-941 to Ser-951.

It belongs to the protein disulfide isomerase family. In terms of assembly, interacts with the cytoplasmic part of DUOX1 and DUOX2. Interacts with TPO and CYBA.

The protein resides in the endoplasmic reticulum membrane. Its function is as follows. May act as a redox regulator involved in DUOX proteins folding. The interaction with DUOX1 and DUOX2 suggest that it belongs to a multiprotein complex constituting the thyroid H(2)O(2) generating system. It is however not sufficient to assist DUOX1 and DUOX2 in H(2)O(2) generation. The sequence is that of Thioredoxin domain-containing protein 11 (TXNDC11) from Bos taurus (Bovine).